The sequence spans 159 residues: Probable chemoreceptor glutamine deamidase CheD 2 (159 aa).

Belongs to the CheD family.

It carries out the reaction L-glutaminyl-[protein] + H2O = L-glutamyl-[protein] + NH4(+). Functionally, probably deamidates glutamine residues to glutamate on methyl-accepting chemotaxis receptors (MCPs), playing an important role in chemotaxis. The chain is Probable chemoreceptor glutamine deamidase CheD 2 from Anaeromyxobacter dehalogenans (strain 2CP-C).